The primary structure comprises 105 residues: Guanidinium exporter (105 aa).

Residues Met-1 to Lys-21 form a helical membrane-spanning segment. Residues Tyr-22–Arg-28 are Cytoplasmic-facing. The helical transmembrane segment at Leu-29–Ala-49 threads the bilayer. Topologically, residues Met-50–Thr-57 are periplasmic. A helical membrane pass occupies residues Ala-58–Leu-78. Over Gly-79–Ser-81 the chain is Cytoplasmic. The helical transmembrane segment at Ala-82–Leu-102 threads the bilayer. At Ser-103 to His-105 the chain is on the periplasmic side.

The protein belongs to the drug/metabolite transporter (DMT) superfamily. Small multidrug resistance (SMR) (TC 2.A.7.1) family. Gdx/SugE subfamily.

It localises to the cell inner membrane. Guanidinium ion exporter. Couples guanidinium export to the proton motive force, exchanging one guanidinium ion for two protons. This is Guanidinium exporter from Escherichia coli O157:H7.